A 178-amino-acid chain; its full sequence is Long polar fimbria protein A (178 aa).

Positions 1-24 (MEFLMKKVVFALSALAVVSTSAFA) are cleaved as a signal peptide.

It belongs to the fimbrial protein family.

It localises to the fimbrium. This Salmonella typhimurium (strain LT2 / SGSC1412 / ATCC 700720) protein is Long polar fimbria protein A (lpfA).